We begin with the raw amino-acid sequence, 169 residues long: Shikimate kinase (169 aa).

13 to 18 contributes to the ATP binding site; it reads GAGKST. Residue serine 17 coordinates Mg(2+). Aspartate 35, arginine 59, and glycine 80 together coordinate substrate. Residue arginine 117 coordinates ATP. Residue arginine 136 coordinates substrate. Arginine 153 lines the ATP pocket.

This sequence belongs to the shikimate kinase family. In terms of assembly, monomer. Mg(2+) is required as a cofactor.

It is found in the cytoplasm. It carries out the reaction shikimate + ATP = 3-phosphoshikimate + ADP + H(+). It functions in the pathway metabolic intermediate biosynthesis; chorismate biosynthesis; chorismate from D-erythrose 4-phosphate and phosphoenolpyruvate: step 5/7. Catalyzes the specific phosphorylation of the 3-hydroxyl group of shikimic acid using ATP as a cosubstrate. The polypeptide is Shikimate kinase (Corynebacterium glutamicum (strain ATCC 13032 / DSM 20300 / JCM 1318 / BCRC 11384 / CCUG 27702 / LMG 3730 / NBRC 12168 / NCIMB 10025 / NRRL B-2784 / 534)).